The chain runs to 293 residues: Formamidopyrimidine-DNA glycosylase (293 aa).

P2 serves as the catalytic Schiff-base intermediate with DNA. Catalysis depends on E3, which acts as the Proton donor. The Proton donor; for beta-elimination activity role is filled by K58. DNA is bound by residues H104, R123, and K166. Residues Q257–R293 form an FPG-type zinc finger. The active-site Proton donor; for delta-elimination activity is R283.

This sequence belongs to the FPG family. Monomer. The cofactor is Zn(2+).

It carries out the reaction Hydrolysis of DNA containing ring-opened 7-methylguanine residues, releasing 2,6-diamino-4-hydroxy-5-(N-methyl)formamidopyrimidine.. The enzyme catalyses 2'-deoxyribonucleotide-(2'-deoxyribose 5'-phosphate)-2'-deoxyribonucleotide-DNA = a 3'-end 2'-deoxyribonucleotide-(2,3-dehydro-2,3-deoxyribose 5'-phosphate)-DNA + a 5'-end 5'-phospho-2'-deoxyribonucleoside-DNA + H(+). In terms of biological role, involved in base excision repair of DNA damaged by oxidation or by mutagenic agents. Acts as a DNA glycosylase that recognizes and removes damaged bases. Has a preference for oxidized purines, such as 7,8-dihydro-8-oxoguanine (8-oxoG). Has AP (apurinic/apyrimidinic) lyase activity and introduces nicks in the DNA strand. Cleaves the DNA backbone by beta-delta elimination to generate a single-strand break at the site of the removed base with both 3'- and 5'-phosphates. The sequence is that of Formamidopyrimidine-DNA glycosylase from Bradyrhizobium sp. (strain BTAi1 / ATCC BAA-1182).